Here is a 118-residue protein sequence, read N- to C-terminus: Ribonuclease P protein component (118 aa).

The protein belongs to the RnpA family. In terms of assembly, consists of a catalytic RNA component (M1 or rnpB) and a protein subunit.

The catalysed reaction is Endonucleolytic cleavage of RNA, removing 5'-extranucleotides from tRNA precursor.. Functionally, RNaseP catalyzes the removal of the 5'-leader sequence from pre-tRNA to produce the mature 5'-terminus. It can also cleave other RNA substrates such as 4.5S RNA. The protein component plays an auxiliary but essential role in vivo by binding to the 5'-leader sequence and broadening the substrate specificity of the ribozyme. The chain is Ribonuclease P protein component from Shewanella denitrificans (strain OS217 / ATCC BAA-1090 / DSM 15013).